The chain runs to 165 residues: Xanthine-guanine phosphoribosyltransferase (165 aa).

5-phospho-alpha-D-ribose 1-diphosphate is bound by residues 41–42 (RG) and 98–106 (DDLTDTGKT). Asp-99 lines the Mg(2+) pocket. Guanine-binding residues include Asp-102 and Ile-145. 2 residues coordinate xanthine: Asp-102 and Ile-145. Residues 102–106 (DTGKT) and 144–145 (WI) contribute to the GMP site.

This sequence belongs to the purine/pyrimidine phosphoribosyltransferase family. XGPT subfamily. As to quaternary structure, homotetramer. The cofactor is Mg(2+).

The protein localises to the cell inner membrane. The catalysed reaction is GMP + diphosphate = guanine + 5-phospho-alpha-D-ribose 1-diphosphate. The enzyme catalyses XMP + diphosphate = xanthine + 5-phospho-alpha-D-ribose 1-diphosphate. It catalyses the reaction IMP + diphosphate = hypoxanthine + 5-phospho-alpha-D-ribose 1-diphosphate. Its pathway is purine metabolism; GMP biosynthesis via salvage pathway; GMP from guanine: step 1/1. The protein operates within purine metabolism; XMP biosynthesis via salvage pathway; XMP from xanthine: step 1/1. In terms of biological role, purine salvage pathway enzyme that catalyzes the transfer of the ribosyl-5-phosphate group from 5-phospho-alpha-D-ribose 1-diphosphate (PRPP) to the N9 position of the 6-oxopurines guanine and xanthine to form the corresponding ribonucleotides GMP (guanosine 5'-monophosphate) and XMP (xanthosine 5'-monophosphate), with the release of PPi. To a lesser extent, also acts on hypoxanthine. The chain is Xanthine-guanine phosphoribosyltransferase from Brucella suis (strain ATCC 23445 / NCTC 10510).